A 582-amino-acid chain; its full sequence is Fructose-1,6-bisphosphatase class 3 (582 aa).

The protein belongs to the FBPase class 3 family. It depends on Mn(2+) as a cofactor.

The catalysed reaction is beta-D-fructose 1,6-bisphosphate + H2O = beta-D-fructose 6-phosphate + phosphate. Its pathway is carbohydrate biosynthesis; gluconeogenesis. In Saccharophagus degradans (strain 2-40 / ATCC 43961 / DSM 17024), this protein is Fructose-1,6-bisphosphatase class 3.